The primary structure comprises 310 residues: tRNA dimethylallyltransferase (310 aa).

14-21 (GPTASGKS) serves as a coordination point for ATP. Position 16-21 (16-21 (TASGKS)) interacts with substrate. 2 interaction with substrate tRNA regions span residues 39-42 (DSMQ) and 163-167 (QRIVR).

Belongs to the IPP transferase family. Monomer. Requires Mg(2+) as cofactor.

It carries out the reaction adenosine(37) in tRNA + dimethylallyl diphosphate = N(6)-dimethylallyladenosine(37) in tRNA + diphosphate. In terms of biological role, catalyzes the transfer of a dimethylallyl group onto the adenine at position 37 in tRNAs that read codons beginning with uridine, leading to the formation of N6-(dimethylallyl)adenosine (i(6)A). This Brucella abortus (strain S19) protein is tRNA dimethylallyltransferase.